The primary structure comprises 1496 residues: Chromosome partition protein MukB (1496 aa).

ATP is bound at residue 63-70 (GGNGAGKS). 2 coiled-coil regions span residues 328-493 (KLEL…QRLS) and 536-632 (KMQA…APAW). Positions 694–811 (PDGSDDVRLN…EVPLFGRAAR (118 aa)) are flexible hinge. Coiled-coil stretches lie at residues 861-1171 (NPEE…SAEE) and 1235-1291 (IDAI…LQNI). The span at 1082–1091 (RARSRRDELQ) shows a compositional bias: basic and acidic residues. A disordered region spans residues 1082–1101 (RARSRRDELQQRLSQQRSRK).

Belongs to the SMC family. MukB subfamily. Homodimerization via its hinge domain. Binds to DNA via its C-terminal region. Interacts, and probably forms a ternary complex, with MukE and MukF via its C-terminal region. The complex formation is stimulated by calcium or magnesium. Interacts with tubulin-related protein FtsZ.

The protein localises to the cytoplasm. It is found in the nucleoid. Its function is as follows. Plays a central role in chromosome condensation, segregation and cell cycle progression. Functions as a homodimer, which is essential for chromosome partition. Involved in negative DNA supercoiling in vivo, and by this means organize and compact chromosomes. May achieve or facilitate chromosome segregation by condensation DNA from both sides of a centrally located replisome during cell division. The polypeptide is Chromosome partition protein MukB (Actinobacillus pleuropneumoniae serotype 3 (strain JL03)).